The following is a 100-amino-acid chain: Aspartyl/glutamyl-tRNA(Asn/Gln) amidotransferase subunit C (100 aa).

Belongs to the GatC family. Heterotrimer of A, B and C subunits.

It carries out the reaction L-glutamyl-tRNA(Gln) + L-glutamine + ATP + H2O = L-glutaminyl-tRNA(Gln) + L-glutamate + ADP + phosphate + H(+). The catalysed reaction is L-aspartyl-tRNA(Asn) + L-glutamine + ATP + H2O = L-asparaginyl-tRNA(Asn) + L-glutamate + ADP + phosphate + 2 H(+). In terms of biological role, allows the formation of correctly charged Asn-tRNA(Asn) or Gln-tRNA(Gln) through the transamidation of misacylated Asp-tRNA(Asn) or Glu-tRNA(Gln) in organisms which lack either or both of asparaginyl-tRNA or glutaminyl-tRNA synthetases. The reaction takes place in the presence of glutamine and ATP through an activated phospho-Asp-tRNA(Asn) or phospho-Glu-tRNA(Gln). This chain is Aspartyl/glutamyl-tRNA(Asn/Gln) amidotransferase subunit C, found in Streptococcus agalactiae serotype Ia (strain ATCC 27591 / A909 / CDC SS700).